Here is a 151-residue protein sequence, read N- to C-terminus: Pollen allergen Sal k 5.0101 (151 aa).

3 disulfide bridges follow: Cys17/Cys88, Cys20/Cys132, and Cys41/Cys76. N-linked (GlcNAc...) asparagine glycosylation occurs at Asn43.

The protein belongs to the Ole e I family. In terms of processing, N-glycosylated. Contains fucose monosaccharides in the glycan structure. In terms of tissue distribution, expressed in pollen (at protein level).

The protein localises to the secreted. This is Pollen allergen Sal k 5.0101 from Kali turgidum (Prickly saltwort).